A 371-amino-acid chain; its full sequence is GPI mannosyltransferase 1 (371 aa).

The next 8 helical transmembrane spans lie at F64 to I84, A120 to L140, I144 to V164, I190 to G210, A248 to F268, V290 to S310, L318 to L338, and S344 to L364.

This sequence belongs to the PIGM family.

It localises to the endoplasmic reticulum membrane. The protein operates within glycolipid biosynthesis; glycosylphosphatidylinositol-anchor biosynthesis. In terms of biological role, mannosyltransferase involved in glycosylphosphatidylinositol-anchor biosynthesis. Transfers the first alpha-1,4-mannose to GlcN-acyl-PI during GPI precursor assembly. Required for cell wall integrity. This chain is GPI mannosyltransferase 1 (gpi14), found in Schizosaccharomyces pombe (strain 972 / ATCC 24843) (Fission yeast).